A 185-amino-acid polypeptide reads, in one-letter code: Peptide deformylase (185 aa).

Fe cation is bound by residues C109 and H152. E153 is a catalytic residue. H156 provides a ligand contact to Fe cation.

Belongs to the polypeptide deformylase family. Requires Fe(2+) as cofactor.

The catalysed reaction is N-terminal N-formyl-L-methionyl-[peptide] + H2O = N-terminal L-methionyl-[peptide] + formate. Its function is as follows. Removes the formyl group from the N-terminal Met of newly synthesized proteins. Requires at least a dipeptide for an efficient rate of reaction. N-terminal L-methionine is a prerequisite for activity but the enzyme has broad specificity at other positions. This is Peptide deformylase from Roseiflexus sp. (strain RS-1).